The chain runs to 536 residues: uncharacterized protein (536 aa).

Disordered regions lie at residues 1–76 and 204–237; these read MSFT…SPAS and NWNSSSSFTSSTSSTPISSSYSSSGTLPSKSNKS. 2 stretches are compositionally biased toward low complexity: residues 7–76 and 204–234; these read TSSV…SPAS and NWNSSSSFTSSTSSTPISSSYSSSGTLPSKS. A helical membrane pass occupies residues 247–267; it reads CSVAIPVGVVLILIGLGIFLW. 2 disordered regions span residues 287–354 and 373–536; these read YGFN…LLGG and DASD…LNLF. A compositionally biased stretch (polar residues) spans 290-326; the sequence is NPNQPSNFRSPNRAPSTNNRYRGWNGSPTPAAGNNTN. Residues 327-350 show a composition bias toward low complexity; the sequence is GRPVAPRPSAGAGGANPPAASQPG. Residues 351–371 traverse the membrane as a helical segment; the sequence is LLGGSSNSAGPIAAATAAGVG. The segment covering 403-424 has biased composition (polar residues); that stretch reads SASNEAEATMPPSNGSNFSEGL. The span at 430-454 shows a compositional bias: low complexity; the sequence is ESGPAVGAAGAAAEAAEHSGSGSDS. Polar residues predominate over residues 480-509; sequence SYGSRAALSSRSQSNLLSPTSTGASNQPNY. Residues 517-527 are compositionally biased toward low complexity; that stretch reads SSSNVSIPRSS.

It localises to the membrane. This is an uncharacterized protein from Schizosaccharomyces pombe (strain 972 / ATCC 24843) (Fission yeast).